The primary structure comprises 1393 residues: Rab3 GTPase-activating protein non-catalytic subunit (1393 aa).

Residues 36-67 (RDPSKSTDWEDDGWGAWEENEPQEPEEEGNTC) are disordered. Serine 39 bears the Phosphoserine mark. The span at 44–64 (WEDDGWGAWEENEPQEPEEEG) shows a compositional bias: acidic residues. A Phosphoserine modification is found at serine 450. Threonine 901 is subject to Phosphothreonine. Residues serine 916 and serine 978 each carry the phosphoserine modification.

The protein belongs to the Rab3-GAP regulatory subunit family. The Rab3 GTPase-activating complex is a heterodimer composed of RAB3GAP1 and RAB3GAP2. The Rab3 GTPase-activating complex interacts with DMXL2. Interacts with LMAN1. Ubiquitous.

Its subcellular location is the cytoplasm. The protein localises to the endoplasmic reticulum. Regulatory subunit of the Rab3 GTPase-activating (Rab3GAP) complex composed of RAB3GAP1 and RAB3GAP2, which has GTPase-activating protein (GAP) activity towards various Rab3 subfamily members (RAB3A, RAB3B, RAB3C and RAB3D), RAB5A and RAB43, and guanine nucleotide exchange factor (GEF) activity towards RAB18. As part of the Rab3GAP complex, acts as a GAP for Rab3 proteins by converting active RAB3-GTP to the inactive form RAB3-GDP. Rab3 proteins are involved in regulated exocytosis of neurotransmitters and hormones. The Rab3GAP complex acts as a GEF for RAB18 by promoting the conversion of inactive RAB18-GDP to the active form RAB18-GTP. Recruits and stabilizes RAB18 at the cis-Golgi membrane in human fibroblasts where RAB18 is most likely activated. Also involved in RAB18 recruitment at the endoplasmic reticulum (ER) membrane where it maintains proper ER structure. Required for normal eye and brain development. May participate in neurodevelopmental processes such as proliferation, migration and differentiation before synapse formation, and non-synaptic vesicular release of neurotransmitters. This Homo sapiens (Human) protein is Rab3 GTPase-activating protein non-catalytic subunit.